A 100-amino-acid chain; its full sequence is ATP synthase subunit c (100 aa).

2 helical membrane-spanning segments follow: residues 27 to 47 (SVIA…IGMG) and 72 to 92 (FIAL…TLIV).

This sequence belongs to the ATPase C chain family. As to quaternary structure, F-type ATPases have 2 components, F(1) - the catalytic core - and F(0) - the membrane proton channel. F(1) has five subunits: alpha(3), beta(3), gamma(1), delta(1), epsilon(1). F(0) has three main subunits: a(1), b(2) and c(10-14). The alpha and beta chains form an alternating ring which encloses part of the gamma chain. F(1) is attached to F(0) by a central stalk formed by the gamma and epsilon chains, while a peripheral stalk is formed by the delta and b chains.

The protein resides in the cell inner membrane. F(1)F(0) ATP synthase produces ATP from ADP in the presence of a proton or sodium gradient. F-type ATPases consist of two structural domains, F(1) containing the extramembraneous catalytic core and F(0) containing the membrane proton channel, linked together by a central stalk and a peripheral stalk. During catalysis, ATP synthesis in the catalytic domain of F(1) is coupled via a rotary mechanism of the central stalk subunits to proton translocation. The protein is ATP synthase subunit c of Campylobacter curvus (strain 525.92).